The sequence spans 122 residues: Large ribosomal subunit protein uL14 (122 aa).

This sequence belongs to the universal ribosomal protein uL14 family. As to quaternary structure, part of the 50S ribosomal subunit. Forms a cluster with proteins L3 and L19. In the 70S ribosome, L14 and L19 interact and together make contacts with the 16S rRNA in bridges B5 and B8.

In terms of biological role, binds to 23S rRNA. Forms part of two intersubunit bridges in the 70S ribosome. The polypeptide is Large ribosomal subunit protein uL14 (Cyanothece sp. (strain PCC 7425 / ATCC 29141)).